Reading from the N-terminus, the 85-residue chain is U4-theraphotoxin-Hhn1a (85 aa).

The first 22 residues, 1–22, serve as a signal peptide directing secretion; it reads MKMTLIAILTCAAVLVLHITAA. The propeptide occupies 23–48; the sequence is EELEAESQLMEVGMPDTELEAVDEER. 3 disulfide bridges follow: C52-C66, C56-C77, and C71-C82.

It belongs to the neurotoxin 12 (Hwtx-2) family. 02 (Hwtx-2) subfamily. In terms of assembly, monomer. As to expression, expressed by the venom gland.

Its subcellular location is the secreted. Neurotoxin active on both insects and mammals. This chain is U4-theraphotoxin-Hhn1a, found in Cyriopagopus hainanus (Chinese bird spider).